Consider the following 242-residue polypeptide: uncharacterized protein (242 aa).

The S4 RNA-binding domain maps to 2–69; that stretch reads YRLAKIISNA…KPRLWIYYKP (68 aa). Asp-102 acts as the Nucleophile in catalysis.

Belongs to the pseudouridine synthase RsuA family.

It catalyses the reaction a uridine in RNA = a pseudouridine in RNA. This is an uncharacterized protein from Rickettsia typhi (strain ATCC VR-144 / Wilmington).